Consider the following 418-residue polypeptide: Gamma-glutamyl phosphate reductase (418 aa).

Belongs to the gamma-glutamyl phosphate reductase family.

It localises to the cytoplasm. It catalyses the reaction L-glutamate 5-semialdehyde + phosphate + NADP(+) = L-glutamyl 5-phosphate + NADPH + H(+). The protein operates within amino-acid biosynthesis; L-proline biosynthesis; L-glutamate 5-semialdehyde from L-glutamate: step 2/2. Its function is as follows. Catalyzes the NADPH-dependent reduction of L-glutamate 5-phosphate into L-glutamate 5-semialdehyde and phosphate. The product spontaneously undergoes cyclization to form 1-pyrroline-5-carboxylate. In Geotalea uraniireducens (strain Rf4) (Geobacter uraniireducens), this protein is Gamma-glutamyl phosphate reductase.